A 429-amino-acid chain; its full sequence is Glutamate-1-semialdehyde 2,1-aminomutase 2 (429 aa).

Lysine 268 is subject to N6-(pyridoxal phosphate)lysine.

This sequence belongs to the class-III pyridoxal-phosphate-dependent aminotransferase family. HemL subfamily. As to quaternary structure, homodimer. The cofactor is pyridoxal 5'-phosphate.

It localises to the cytoplasm. The catalysed reaction is (S)-4-amino-5-oxopentanoate = 5-aminolevulinate. It participates in porphyrin-containing compound metabolism; protoporphyrin-IX biosynthesis; 5-aminolevulinate from L-glutamyl-tRNA(Glu): step 2/2. The sequence is that of Glutamate-1-semialdehyde 2,1-aminomutase 2 from Staphylococcus aureus (strain USA300).